The following is a 65-amino-acid chain: Large ribosomal subunit protein bL35 (65 aa).

The protein belongs to the bacterial ribosomal protein bL35 family.

This chain is Large ribosomal subunit protein bL35, found in Geobacter sp. (strain M21).